Consider the following 406-residue polypeptide: Homocysteine-responsive endoplasmic reticulum-resident ubiquitin-like domain member 2 protein (406 aa).

In terms of domain architecture, Ubiquitin-like spans 10–89; sequence VTLIIKAPNQ…HMVHLVCTSR (80 aa). Residues 86–156 form a disordered region; the sequence is CTSRTPPSSP…PQAQTDPAQS (71 aa). 2 stretches are compositionally biased toward low complexity: residues 87 to 98 and 109 to 139; these read TSRTPPSSPKSS and SNSN…SSSE. A compositionally biased stretch (polar residues) spans 145–156; sequence TLPQAQTDPAQS. The chain crosses the membrane as a helical span at residues 302–322; sequence FIMVMGAMLLVYLHQAGWFPF.

Its subcellular location is the membrane. Functionally, could be involved in the unfolded protein response (UPR) pathway. In Bos taurus (Bovine), this protein is Homocysteine-responsive endoplasmic reticulum-resident ubiquitin-like domain member 2 protein (HERPUD2).